We begin with the raw amino-acid sequence, 284 residues long: ADP-polyphosphate phosphotransferase 3 (284 aa).

Basic and acidic residues-rich tracts occupy residues 1 to 22 and 260 to 277; these read MDKH…RKSA and DLGK…DTRR. 2 disordered regions span residues 1–32 and 260–284; these read MDKH…TRSG and DLGK…PNLF.

The protein belongs to the polyphosphate kinase 2 (PPK2) family. Class I subfamily.

It carries out the reaction [phosphate](n) + ATP = [phosphate](n+1) + ADP. The catalysed reaction is [phosphate](n) + GTP = [phosphate](n+1) + GDP. In terms of biological role, uses inorganic polyphosphate (polyP) as a donor to convert ADP to ATP. Can also convert GDP to GTP, with lower efficiency. The sequence is that of ADP-polyphosphate phosphotransferase 3 from Rhizobium meliloti (strain 1021) (Ensifer meliloti).